A 406-amino-acid chain; its full sequence is Acetate kinase (406 aa).

Mg(2+) is bound at residue Asn10. Lys17 is an ATP binding site. Arg92 contributes to the substrate binding site. The Proton donor/acceptor role is filled by Asp151. Residues 211–215 (HLGSG), 286–288 (DFR), and 335–339 (GIGEN) contribute to the ATP site. Glu389 contributes to the Mg(2+) binding site.

Belongs to the acetokinase family. In terms of assembly, homodimer. Mg(2+) is required as a cofactor. It depends on Mn(2+) as a cofactor.

It is found in the cytoplasm. It carries out the reaction acetate + ATP = acetyl phosphate + ADP. Its pathway is metabolic intermediate biosynthesis; acetyl-CoA biosynthesis; acetyl-CoA from acetate: step 1/2. In terms of biological role, catalyzes the formation of acetyl phosphate from acetate and ATP. Can also catalyze the reverse reaction. The protein is Acetate kinase of Buchnera aphidicola subsp. Cinara cedri (strain Cc).